Reading from the N-terminus, the 90-residue chain is Defensin-like protein 193 (90 aa).

The first 27 residues, M1–A27, serve as a signal peptide directing secretion. Intrachain disulfides connect C32-C86, C45-C69, C54-C81, and C58-C83.

This sequence belongs to the DEFL family. Protease inhibitor I18 (RTI/MTI-2) subfamily.

It is found in the secreted. In Arabidopsis thaliana (Mouse-ear cress), this protein is Defensin-like protein 193 (ATTI2).